The following is a 727-amino-acid chain: Pentatricopeptide repeat-containing protein At4g20740 (727 aa).

The disordered stretch occupies residues 1 to 84 (MKSPKPPNLS…PSPPSHSTVI (84 aa)). The segment covering 38 to 56 (SNRQSIPRVSPQPQSNSLA) has biased composition (polar residues). A compositionally biased stretch (basic and acidic residues) spans 59 to 70 (TPFDLRKWDPET). PPR repeat units lie at residues 157–191 (DFAA…GRPP), 192–226 (SEKQ…GFKP), 227–261 (RVFL…GLVE), 262–296 (ESTT…LCKP), 297–331 (DVFA…EIKP), 332–366 (DVMA…QILI), 367–401 (DREI…GYIA), 402–436 (DIGI…ELEP), 437–471 (DFET…GYPV), 506–540 (SVSV…GFEP), 541–575 (DSSS…SCVP), 576–606 (SIAA…CLGN), 612–646 (MEFK…GVFI), and 647–681 (NEVI…KVMT).

The protein belongs to the PPR family. P subfamily.

The protein is Pentatricopeptide repeat-containing protein At4g20740 of Arabidopsis thaliana (Mouse-ear cress).